The primary structure comprises 88 residues: Small ribosomal subunit protein bS16 (88 aa).

It belongs to the bacterial ribosomal protein bS16 family.

This is Small ribosomal subunit protein bS16 from Halothermothrix orenii (strain H 168 / OCM 544 / DSM 9562).